The following is a 337-amino-acid chain: Adenosine deaminase (337 aa).

Zn(2+)-binding residues include H12 and H14. Residues H14, D16, and G170 each contribute to the substrate site. H197 is a Zn(2+) binding site. E200 (proton donor) is an active-site residue. D278 contacts Zn(2+). D279 contributes to the substrate binding site.

Belongs to the metallo-dependent hydrolases superfamily. Adenosine and AMP deaminases family. Adenosine deaminase subfamily. It depends on Zn(2+) as a cofactor.

The catalysed reaction is adenosine + H2O + H(+) = inosine + NH4(+). The enzyme catalyses 2'-deoxyadenosine + H2O + H(+) = 2'-deoxyinosine + NH4(+). Functionally, catalyzes the hydrolytic deamination of adenosine and 2-deoxyadenosine. The chain is Adenosine deaminase from Pectobacterium atrosepticum (strain SCRI 1043 / ATCC BAA-672) (Erwinia carotovora subsp. atroseptica).